The sequence spans 461 residues: uncharacterized protein (461 aa).

2 disordered regions span residues 254–273 (NNNN…NNNN) and 368–414 (QPSQ…NNNS). The segment covering 381–413 (NNNNNNNNNNNNNNNNNNNNNNNNNNNNNNNNN) has biased composition (low complexity).

This is an uncharacterized protein from Dictyostelium discoideum (Social amoeba).